A 488-amino-acid chain; its full sequence is Phenylalanine--tRNA ligase alpha subunit (488 aa).

L-phenylalanine is bound by residues threonine 332, 371-373 (QLD), and phenylalanine 410. Glutamate 412 contacts Mg(2+). Position 435 (phenylalanine 435) interacts with L-phenylalanine.

The protein belongs to the class-II aminoacyl-tRNA synthetase family. Phe-tRNA synthetase alpha subunit type 2 subfamily. In terms of assembly, tetramer of two alpha and two beta subunits. Mg(2+) is required as a cofactor.

The protein resides in the cytoplasm. It carries out the reaction tRNA(Phe) + L-phenylalanine + ATP = L-phenylalanyl-tRNA(Phe) + AMP + diphosphate + H(+). This Aeropyrum pernix (strain ATCC 700893 / DSM 11879 / JCM 9820 / NBRC 100138 / K1) protein is Phenylalanine--tRNA ligase alpha subunit.